The following is a 108-amino-acid chain: Integration host factor subunit alpha (108 aa).

The protein belongs to the bacterial histone-like protein family. As to quaternary structure, heterodimer of an alpha and a beta chain.

Functionally, this protein is one of the two subunits of integration host factor, a specific DNA-binding protein that functions in genetic recombination as well as in transcriptional and translational control. The sequence is that of Integration host factor subunit alpha from Bartonella henselae (strain ATCC 49882 / DSM 28221 / CCUG 30454 / Houston 1) (Rochalimaea henselae).